A 61-amino-acid chain; its full sequence is MAKKSMIAKAARKPKFSVRGYTRCQICGRPHSVYRDFGICRVCLRKMANEGLIPGLKKASW.

Cysteine 24, cysteine 27, cysteine 40, and cysteine 43 together coordinate Zn(2+).

The protein belongs to the universal ribosomal protein uS14 family. Zinc-binding uS14 subfamily. As to quaternary structure, part of the 30S ribosomal subunit. Contacts proteins S3 and S10. The cofactor is Zn(2+).

In terms of biological role, binds 16S rRNA, required for the assembly of 30S particles and may also be responsible for determining the conformation of the 16S rRNA at the A site. The chain is Small ribosomal subunit protein uS14 from Campylobacter lari (strain RM2100 / D67 / ATCC BAA-1060).